Reading from the N-terminus, the 137-residue chain is Basic phospholipase A2 homolog Pgo-K49 (137 aa).

Residues 1–16 (MRTLLIVAVLLVGVEG) form the signal peptide. Intrachain disulfides connect Cys42/Cys131, Cys44/Cys60, Cys59/Cys111, Cys65/Cys137, Cys66/Cys104, Cys73/Cys97, and Cys91/Cys102. Positions 121–133 (KKYKIHMKFFCKK) are important for membrane-damaging activities in eukaryotes and bacteria; heparin-binding.

Expressed by the venom gland.

The protein localises to the secreted. In terms of biological role, snake venom phospholipase A2 homolog that lacks enzymatic activity. Is myotoxic. A model of myotoxic mechanism has been proposed: an apo Lys49-PLA2 is activated by the entrance of a hydrophobic molecule (e.g. fatty acid) at the hydrophobic channel of the protein leading to a reorientation of a monomer. This reorientation causes a transition between 'inactive' to 'active' states, causing alignment of C-terminal and membrane-docking sites (MDoS) side-by-side and putting the membrane-disruption sites (MDiS) in the same plane, exposed to solvent and in a symmetric position for both monomers. The MDoS region stabilizes the toxin on membrane by the interaction of charged residues with phospholipid head groups. Subsequently, the MDiS region destabilizes the membrane with penetration of hydrophobic residues. This insertion causes a disorganization of the membrane, allowing an uncontrolled influx of ions (i.e. calcium and sodium), and eventually triggering irreversible intracellular alterations and cell death. The sequence is that of Basic phospholipase A2 homolog Pgo-K49 from Cerrophidion godmani (Porthidium godmani).